We begin with the raw amino-acid sequence, 213 residues long: Uridine kinase (213 aa).

Residue 15 to 22 (GASASGKS) coordinates ATP.

Belongs to the uridine kinase family.

The protein resides in the cytoplasm. The catalysed reaction is uridine + ATP = UMP + ADP + H(+). The enzyme catalyses cytidine + ATP = CMP + ADP + H(+). The protein operates within pyrimidine metabolism; CTP biosynthesis via salvage pathway; CTP from cytidine: step 1/3. Its pathway is pyrimidine metabolism; UMP biosynthesis via salvage pathway; UMP from uridine: step 1/1. This Erwinia tasmaniensis (strain DSM 17950 / CFBP 7177 / CIP 109463 / NCPPB 4357 / Et1/99) protein is Uridine kinase.